A 354-amino-acid chain; its full sequence is Zinc finger protein 346 (354 aa).

4 consecutive Matrin-type zinc fingers follow at residues 34–64 (TQCK…KVRR), 95–125 (KCCP…NLRL), 165–195 (KFCK…QETK), and 232–262 (FSCD…QLMS). C36, C39, H52, H58, C97, C100, H113, and H119 together coordinate Zn(2+). The interval 263–343 (MTPLSKEGPP…QPYVREDMMG (81 aa)) is disordered. Composition is skewed to low complexity over residues 270 to 289 (GPPA…TGGA) and 310 to 323 (GPSS…MGGL). A compositionally biased stretch (pro residues) spans 324 to 333 (MPPPYPPPHS).

It localises to the nucleus. It is found in the cytoplasm. Its function is as follows. Binds preferentially to dsRNA, but also to RNA-DNA hybrids. In Xenopus tropicalis (Western clawed frog), this protein is Zinc finger protein 346.